The following is a 422-amino-acid chain: N-acylglucosamine 2-epimerase (422 aa).

Residues 185-206 (LLNLVEQLGEADEELAGISAEL) are leucine-zipper.

This sequence belongs to the N-acylglucosamine 2-epimerase family. Homodimer. Forms a heterodimer with renin and inhibits its activity.

The enzyme catalyses an N-acyl-D-glucosamine = an N-acyl-D-mannosamine. The protein operates within amino-sugar metabolism; N-acetylneuraminate degradation. Its function is as follows. Catalyzes the interconversion of N-acetylglucosamine to N-acetylmannosamine. Involved in the N-glycolylneuraminic acid (Neu5Gc) degradation pathway. The protein is N-acylglucosamine 2-epimerase (RENBP) of Bos taurus (Bovine).